The following is a 258-amino-acid chain: Trans-aconitate 2-methyltransferase (258 aa).

It belongs to the methyltransferase superfamily. Tam family.

It localises to the cytoplasm. It catalyses the reaction trans-aconitate + S-adenosyl-L-methionine = (E)-3-(methoxycarbonyl)pent-2-enedioate + S-adenosyl-L-homocysteine. Functionally, catalyzes the S-adenosylmethionine monomethyl esterification of trans-aconitate. In Deinococcus radiodurans (strain ATCC 13939 / DSM 20539 / JCM 16871 / CCUG 27074 / LMG 4051 / NBRC 15346 / NCIMB 9279 / VKM B-1422 / R1), this protein is Trans-aconitate 2-methyltransferase.